We begin with the raw amino-acid sequence, 2442 residues long: CREB-binding protein (2442 aa).

Disordered regions lie at residues 1–41 (MAEN…NDLP) and 74–179 (LRGG…CMNA). Ala2 carries the post-translational modification N-acetylalanine. The segment covering 20–30 (PGFSANDSTDF) has biased composition (polar residues). Positions 80–90 (SSINPGIGNVS) are enriched in low complexity. A Phosphoserine modification is found at Ser121. The span at 122–131 (PLSQGDSSAP) shows a compositional bias: polar residues. Ser124 is modified (phosphoserine; by ATM). A compositionally biased stretch (low complexity) spans 136–150 (QAASTSGPTPAASQA). Over residues 151 to 172 (LNPQAQKQVGLATSSPATSQTG) the composition is skewed to polar residues. Position 220 is an omega-N-methylarginine (Arg220). The tract at residues 227–410 (PTPAMQGASS…GKACQVAHCA (184 aa)) is interaction with SRCAP. Residues 266 to 290 (KMGITGNTSPFGQPFSQAGGQPMGA) form a disordered region. Over residues 270–284 (TGNTSPFGQPFSQAG) the composition is skewed to polar residues. Residues 347 to 433 (DPEKRKLIQQ…RHDCPVCLPL (87 aa)) form a TAZ-type 1 zinc finger. Zn(2+) contacts are provided by His363, Cys367, Cys380, Cys385, His394, Cys398, Cys404, Cys409, His418, Cys422, Cys427, and Cys430. The KIX domain occupies 587–666 (GVRKGWHEHV…KIYKIQKELE (80 aa)). Asymmetric dimethylarginine occurs at positions 601 and 625. At Lys657 the chain carries N6-acetyllysine. 2 stretches are compositionally biased toward polar residues: residues 794 to 805 (LPQNQFPSSSGA) and 814 to 823 (PAQTGVSQGQ). The segment at 794 to 1083 (LPQNQFPSSS…STSPSQPRKK (290 aa)) is disordered. Composition is skewed to pro residues over residues 844 to 860 (PCPP…PPPA) and 876 to 885 (GMTPPQPAAP). 2 stretches are compositionally biased toward low complexity: residues 886-929 (TQPS…VTPQ) and 937-952 (PSVA…PTPV). Residues 973–988 (PTPSSVASAETNSQQP) are compositionally biased toward polar residues. A Glycyl lysine isopeptide (Lys-Gly) (interchain with G-Cter in SUMO1) cross-link involves residue Lys998. Residues 1011 to 1021 (GESKGEPRSEM) show a composition bias toward basic and acidic residues. Lys1014 carries the post-translational modification N6-acetyllysine. Phosphoserine is present on Ser1030. Residues 1032–1059 (VKEETDIAEQKSEPMEVDEKKPEVKVEV) show a composition bias toward basic and acidic residues. Residues Lys1033 and Lys1056 each participate in a glycyl lysine isopeptide (Lys-Gly) (interchain with G-Cter in SUMO1) cross-link. The span at 1066-1078 (SSNGTASQSTSPS) shows a compositional bias: low complexity. Phosphoserine is present on Ser1076. The Bromo domain maps to 1085 to 1192 (FKPEELRQAL…EVFEQEIDPV (108 aa)). The segment at 1124 to 1170 (DYFDIVKNPMDLSTIKRKLDTGQYQEPWQYVDDVWLMFNNAWLYNRK) is interaction with histone. Residues 1162-1180 (NNAWLYNRKTSRVYKFCSK) form an interaction with ASF1A region. Lys1216 carries the N6-acetyllysine modification. Residues 1323–1700 (KFSAKRLQTT…MLVELHTQGQ (378 aa)) form the CBP/p300-type HAT domain. A phosphoserine; by IKKA mark is found at Ser1382 and Ser1386. Residues 1433-1435 (YLD) form an interaction with histone region. Acetyl-CoA-binding positions include 1434 to 1436 (LDS), 1446 to 1447 (RT), Ile1493, Arg1498, and Trp1502. The interaction with TRERF1 stretch occupies residues 1460–1891 (YVKKLGYVTG…LPSPTSAPPG (432 aa)). The span at 1556–1568 (LEQEEEERKKEES) shows a compositional bias: basic and acidic residues. Positions 1556 to 1615 (LEQEEEERKKEESTAASETTEGSQGDSKNAKKKNNKKTNKNKSSISRANKKKPSMPNVSN) are disordered. N6-acetyllysine occurs at positions 1583, 1591, 1592, 1595, and 1597. Basic residues predominate over residues 1585–1595 (AKKKNNKKTNK). Residues 1702–1750 (RFVYTCNECKHHVETRWHCTVCEDYDLCINCYNTKSHAHKMVKWGLGLD) form a ZZ-type zinc finger. Residues Cys1707, Cys1710, Cys1720, Cys1723, Cys1729, Cys1732, His1738, and His1740 each contribute to the Zn(2+) site. 2 positions are modified to N6-acetyllysine: Lys1741 and Lys1744. Ser1763 bears the Phosphoserine mark. Residues 1765–1846 (QESRRLSIQR…KCPVPFCLNI (82 aa)) form a TAZ-type 2 zinc finger. Disordered regions lie at residues 1874–1959 (TRNV…VEAA) and 1977–2028 (INNS…PLPQ). Residues 1900 to 1912 (PQTPQPPAQPQPS) show a composition bias toward pro residues. Residues 1925–1940 (ARTQPPTTVSTGKPTS) are compositionally biased toward polar residues. Pro residues predominate over residues 1943 to 1954 (PAPPPPAQPPPA). Positions 2018–2027 (PGQWQQAPLP) are enriched in low complexity. 3 positions are modified to phosphoserine: Ser2063, Ser2076, and Ser2079. Low complexity-rich tracts occupy residues 2112–2137 (QPGM…HQQP), 2146–2160 (QAGV…QQQA), 2196–2219 (QLLQ…QGSA), 2228–2263 (HGQF…SMGQ), and 2294–2305 (RILQQQQMKQQI). 2 disordered regions span residues 2112 to 2263 (QPGM…SMGQ) and 2294 to 2433 (RILQ…TTGD). 2 stretches are compositionally biased toward polar residues: residues 2315–2327 (SPQQ…QPQA) and 2334–2343 (QIATSLSNQV). The span at 2349-2372 (VQSPRPQSQPPHSSPSPRIQPQPS) shows a compositional bias: pro residues. Position 2351 is a phosphoserine (Ser2351). Over residues 2411 to 2424 (QLNTPSRSALSSEL) the composition is skewed to polar residues.

In terms of assembly, found in a complex containing NCOA2; NCOA3; IKKA; IKKB and IKBKG. Probably part of a complex with HIF1A and EP300. Interacts with GATA1; the interaction results in acetylation and enhancement of transcriptional activity of GATA1. Interacts with MAF and ZCCHC12. Interacts with DAXX; the interaction is dependent on CBP sumoylation and results in suppression of the transcriptional activity via recruitment of HDAC2 to DAXX. Interacts with phosphorylated CREB1. Interacts with CITED4 (C-terminal region). Interacts (via the TAZ-type 1 domain) with HIF1A. Interacts with SRCAP, CARM1, ELF3, MLLT7/FOXO4, N4BP2, NCOA1, NCOA3, NCOA6, PCAF, DDX5, DDX17, PELP1, PML, SMAD1, SMAD2, SMAD3, SPIB and TRERF1. Interacts with KLF1; the interaction results in acetylation of KLF1 and enhancement of its transcriptional activity. Interacts with MTDH. Interacts with NFATC4. Interacts with MAFG; the interaction acetylates MAFG in the basic region and stimulates NFE2 transcriptional activity through increasing its DNA-binding activity. Interacts with IRF2; the interaction acetylates IRF2 and regulates its activity on the H4 promoter. Interacts with IRF3 (when phosphorylated); forming the dsRNA-activated factor 1 (DRAF1), a complex which activates the transcription of the type I interferon genes. Interacts (via N-terminus) with SS18L1/CREST (via C-terminus). Interacts with MECOM. Interacts with CITED1 (via C-terminus). Interacts with FOXO1; the interaction acetylates FOXO1 and inhibits its transcriptional activity. Interacts with NPAS2, CLOCK and BMAL1. Interacts with ASF1A and ASF1B; this promotes histone acetylation. Interacts with acetylated TP53/p53 and with the acetylated histones H3 and H4. Interacts (via transactivation domain and C-terminus) with PCNA; the interaction occurs on chromatin in UV-irradiated damaged cells. Interacts with DHX9 (via N-terminus); this interaction mediates association with RNA polymerase II holoenzyme and stimulates CREB-dependent transcriptional activation. Interacts with SMAD4; negatively regulated by ZBTB7A. Interacts with DUX4 (via C-terminus). Forms a complex with KMT2A and CREB1. Interacts with DDX3X; this interaction may facilitate HNF4A acetylation. Interacts with MSX1; the interaction may inhibit MSX1 autoinactivation. Interacts with ACSS2. As to quaternary structure, (Microbial infection) Interacts with HTLV-1 Tax, p30II and HBZ. (Microbial infection) Interacts with human herpes virus 8/HHV-8 protein vIRF-1; this interaction inhibits CREBBP binding to IRF3. In terms of assembly, (Microbial infection) Interacts with HIV-1 Tat. In terms of processing, methylation of the KIX domain by CARM1 blocks association with CREB. This results in the blockade of CREB signaling, and in activation of apoptotic response. Phosphorylated by CHUK/IKKA at Ser-1382 and Ser-1386; these phosphorylations promote cell growth by switching the binding preference of CREBBP from TP53 to NF-kappa-B. Phosphorylated by _ at Ser-124 in response to DNA damage, promoting interaction with MRE11 and lactylation of MRE11. Post-translationally, sumoylation negatively regulates transcriptional activity via the recruitment of DAAX. In terms of processing, autoacetylation is required for binding to protein substrates, such as acetylated histones and acetylated TP53/p53. Autoacetylation is induced by glucose and fatty acids.

It localises to the cytoplasm. The protein localises to the nucleus. It catalyses the reaction L-lysyl-[histone] + acetyl-CoA = N(6)-acetyl-L-lysyl-[histone] + CoA + H(+). The enzyme catalyses L-lysyl-[protein] + acetyl-CoA = N(6)-acetyl-L-lysyl-[protein] + CoA + H(+). It carries out the reaction (S)-lactoyl-CoA + L-lysyl-[protein] = N(6)-[(S)-lactoyl]-L-lysyl-[protein] + CoA + H(+). Its function is as follows. Acetylates histones, giving a specific tag for transcriptional activation. Mediates acetylation of histone H3 at 'Lys-18' and 'Lys-27' (H3K18ac and H3K27ac, respectively). Also acetylates non-histone proteins, like DDX21, FBL, IRF2, MAFG, NCOA3, POLR1E/PAF53 and FOXO1. Binds specifically to phosphorylated CREB and enhances its transcriptional activity toward cAMP-responsive genes. Acts as a coactivator of ALX1. Acts as a circadian transcriptional coactivator which enhances the activity of the circadian transcriptional activators: NPAS2-BMAL1 and CLOCK-BMAL1 heterodimers. Acetylates PCNA; acetylation promotes removal of chromatin-bound PCNA and its degradation during nucleotide excision repair (NER). Acetylates POLR1E/PAF53, leading to decreased association of RNA polymerase I with the rDNA promoter region and coding region. Acetylates DDX21, thereby inhibiting DDX21 helicase activity. Acetylates FBL, preventing methylation of 'Gln-105' of histone H2A (H2AQ104me). In addition to protein acetyltransferase, can use different acyl-CoA substrates, such as lactoyl-CoA, and is able to mediate protein lactylation. Catalyzes lactylation of MRE11 in response to DNA damage, thereby promoting DNA double-strand breaks (DSBs) via homologous recombination (HR). Functions as a transcriptional coactivator for SMAD4 in the TGF-beta signaling pathway. The polypeptide is CREB-binding protein (Homo sapiens (Human)).